The primary structure comprises 139 residues: Inactive palmitoleoyl-protein carboxylesterase notum1b (139 aa).

This sequence belongs to the pectinacetylesterase family. Notum subfamily.

In terms of biological role, probable inactive palmitoleoyl-protein carboxylesterase. The polypeptide is Inactive palmitoleoyl-protein carboxylesterase notum1b (Danio rerio (Zebrafish)).